Here is a 3330-residue protein sequence, read N- to C-terminus: Laminin subunit alpha-3 (3330 aa).

The signal sequence occupies residues 1-31; sequence MAVALGRAPRSLPLLLTLLLLLLLRMSPSWS. A Laminin N-terminal domain is found at 40–295; it reads SSRSLHPPYF…SIKDISVGGR (256 aa). The N-linked (GlcNAc...) asparagine glycan is linked to Asn-139. A domain V region spans residues 295-725; that stretch reads RCVCNGHAEA…NNYYFPDLHH (431 aa). 27 cysteine pairs are disulfide-bonded: Cys-296/Cys-305, Cys-298/Cys-316, Cys-318/Cys-327, Cys-330/Cys-350, Cys-353/Cys-362, Cys-355/Cys-387, Cys-390/Cys-399, Cys-402/Cys-420, Cys-423/Cys-433, Cys-425/Cys-440, Cys-442/Cys-451, Cys-454/Cys-464, Cys-488/Cys-500, Cys-490/Cys-506, Cys-508/Cys-517, Cys-520/Cys-530, Cys-533/Cys-545, Cys-535/Cys-552, Cys-554/Cys-563, Cys-566/Cys-583, Cys-628/Cys-642, Cys-630/Cys-649, Cys-651/Cys-660, Cys-663/Cys-678, Cys-681/Cys-693, Cys-683/Cys-700, and Cys-702/Cys-711. 8 consecutive Laminin EGF-like domains span residues 296 to 350, 353 to 420, 423 to 464, 488 to 530, 533 to 576, 582 to 625, 628 to 678, and 681 to 725; these read CVCN…HNEC, CNCH…LHGC, CSCD…FPFC, CDCN…FPIC, CQCS…FPYC, VCHP…PRGC, CQCH…YFGC, and CQCD…DLHH. An N-linked (GlcNAc...) asparagine glycan is attached at Asn-445. The interval 793–1262 is domain IV 1 (domain IV B); that stretch reads TEAISGRITL…VAFYHNGAIP (470 aa). The interval 1263–1462 is domain III B; the sequence is CECDPAGTAG…CFCFGVNTDC (200 aa). 12 disulfide bridges follow: Cys-1309–Cys-1316, Cys-1311–Cys-1323, Cys-1325–Cys-1334, Cys-1337–Cys-1350, Cys-1353–Cys-1368, Cys-1355–Cys-1375, Cys-1377–Cys-1386, Cys-1389–Cys-1399, Cys-1402–Cys-1414, Cys-1404–Cys-1421, Cys-1423–Cys-1432, and Cys-1435–Cys-1450. Laminin EGF-like domains are found at residues 1309 to 1352, 1353 to 1401, and 1402 to 1452; these read CNCG…GCDV, CNCS…ECVP, and CSCN…GCTK. A glycan (N-linked (GlcNAc...) asparagine) is linked at Asn-1354. The Laminin EGF-like 12; first part domain occupies 1453-1462; it reads CFCFGVNTDC. The region spanning 1466-1650 is the Laminin IV type A domain; it reads HKQRAKFVDM…SGPRAHLVEM (185 aa). A Laminin EGF-like 12; second part domain is found at 1651 to 1683; that stretch reads CACPPDYTGDSCQGCRPGYYWDNKSLPVGRCVP. Residues 1651-1818 form a domain III A region; the sequence is CACPPDYTGD…DGSPAEECDD (168 aa). A glycan (N-linked (GlcNAc...) asparagine) is linked at Asn-1673. Intrachain disulfides connect Cys-1684/Cys-1693, Cys-1686/Cys-1700, Cys-1703/Cys-1712, Cys-1715/Cys-1728, Cys-1731/Cys-1743, Cys-1733/Cys-1752, Cys-1754/Cys-1763, and Cys-1766/Cys-1781. 2 Laminin EGF-like domains span residues 1684 to 1730 and 1731 to 1783; these read CNCN…SCRV and CPCP…SCQP. The 35-residue stretch at 1784 to 1818 folds into the Laminin EGF-like 15; truncated domain; sequence CNCNSNGQLGPCDPLTGDCVNQEPKDGSPAEECDD. Positions 1819–2385 are domain II and I; that stretch reads CDSCVMTLLN…ARDAANKVAI (567 aa). 4 coiled-coil regions span residues 1851–1980, 2012–2057, 2088–2165, and 2211–2238; these read TGAL…LRSR, VENN…HENE, LLQT…GDEL, and KRAKTLSSDSEELLNEAKMTQKRLQQVS. Asn-2159 carries N-linked (GlcNAc...) asparagine glycosylation. A glycan (N-linked (GlcNAc...) asparagine) is linked at Asn-2261. A Cell attachment site motif is present at residues 2274-2276; sequence RGD. A coiled-coil region spans residues 2318–2383; it reads SARREDFSKA…QQARDAANKV (66 aa). Asn-2332, Asn-2361, Asn-2498, Asn-2580, and Asn-2747 each carry an N-linked (GlcNAc...) asparagine glycan. Laminin G-like domains are found at residues 2386–2587, 2594–2756, 2763–2923, 2983–3147, and 3154–3327; these read PMRF…VEPC, SDKN…TKKC, VRTA…LGGC, ALQF…VSPC, and KGIY…LNGC. Cystine bridges form between Cys-2557/Cys-2587, Cys-2733/Cys-2756, and Cys-2891/Cys-2923. The N-linked (GlcNAc...) asparagine glycan is linked to Asn-3094. A disulfide bridge links Cys-3124 with Cys-3147. Asn-3270 is a glycosylation site (N-linked (GlcNAc...) asparagine). Residues Cys-3299 and Cys-3327 are joined by a disulfide bond.

As to quaternary structure, laminin is a complex glycoprotein, consisting of three different polypeptide chains (alpha, beta, gamma), which are bound to each other by disulfide bonds into a cross-shaped molecule comprising one long and three short arms with globules at each end. Alpha-3 is a subunit of laminin-5 (laminin-332 or epiligrin/kalinin/nicein), laminin-6 (laminin-311 or K-laminin) and laminin-7 (laminin-321 or KS-laminin). Basal membrane of the upper alimentary tract and urinary and nasal epithelia, salivary glands and teeth (both variants). Isoform A is predominantly expressed in skin, hair follicles and developing neurons of the trigeminal ganglion. Isoform B was found in bronchi, alveoli, stomach, intestinal crypts, whisker pads, CNS, telencephalic neuroectoderm, thalamus, Rathke pouch and periventricular subependymal germinal layer.

The protein resides in the secreted. The protein localises to the extracellular space. It localises to the extracellular matrix. Its subcellular location is the basement membrane. Its function is as follows. Binding to cells via a high affinity receptor, laminin is thought to mediate the attachment, migration and organization of cells into tissues during embryonic development by interacting with other extracellular matrix components. In terms of biological role, laminin-5 is thought to be involved in (1) cell adhesion via integrin alpha-3/beta-1 in focal adhesion and integrin alpha-6/beta-4 in hemidesmosomes, (2) signal transduction via tyrosine phosphorylation of pp125-FAK and p80, (3) differentiation of keratinocytes. The polypeptide is Laminin subunit alpha-3 (Lama3) (Mus musculus (Mouse)).